The primary structure comprises 247 residues: Cyclin-Q (247 aa).

The protein belongs to the cyclin family. Cyclin-like FAM58 subfamily.

Functionally, may be an activating cyclin for the cyclin-associated kinase CDK10. The sequence is that of Cyclin-Q (ccnq) from Danio rerio (Zebrafish).